A 707-amino-acid polypeptide reads, in one-letter code: tRNA 5-methylaminomethyl-2-thiouridine biosynthesis bifunctional protein MnmC (707 aa).

The interval 1 to 264 (MTKKLEHEYI…KREMLFGTFE (264 aa)) is tRNA (mnm(5)s(2)U34)-methyltransferase. An FAD-dependent cmnm(5)s(2)U34 oxidoreductase region spans residues 312-707 (IGGGLAGAHA…LFRDLTRNRI (396 aa)).

It in the N-terminal section; belongs to the methyltransferase superfamily. tRNA (mnm(5)s(2)U34)-methyltransferase family. The protein in the C-terminal section; belongs to the DAO family. FAD serves as cofactor.

It localises to the cytoplasm. It catalyses the reaction 5-aminomethyl-2-thiouridine(34) in tRNA + S-adenosyl-L-methionine = 5-methylaminomethyl-2-thiouridine(34) in tRNA + S-adenosyl-L-homocysteine + H(+). Its function is as follows. Catalyzes the last two steps in the biosynthesis of 5-methylaminomethyl-2-thiouridine (mnm(5)s(2)U) at the wobble position (U34) in tRNA. Catalyzes the FAD-dependent demodification of cmnm(5)s(2)U34 to nm(5)s(2)U34, followed by the transfer of a methyl group from S-adenosyl-L-methionine to nm(5)s(2)U34, to form mnm(5)s(2)U34. This Saccharophagus degradans (strain 2-40 / ATCC 43961 / DSM 17024) protein is tRNA 5-methylaminomethyl-2-thiouridine biosynthesis bifunctional protein MnmC.